A 519-amino-acid polypeptide reads, in one-letter code: Ribonuclease Y (519 aa).

Residues 3–23 (LMIFAYIAIGAVLGAGTGYLL) form a helical membrane-spanning segment. Positions 209–272 (TVTAVTLPSE…QVAKMALERL (64 aa)) constitute a KH domain. The region spanning 335-428 (VLQHSLEVSA…VQAADSISGA (94 aa)) is the HD domain.

It belongs to the RNase Y family.

It is found in the cell membrane. Functionally, endoribonuclease that initiates mRNA decay. The protein is Ribonuclease Y of Nitratidesulfovibrio vulgaris (strain ATCC 29579 / DSM 644 / CCUG 34227 / NCIMB 8303 / VKM B-1760 / Hildenborough) (Desulfovibrio vulgaris).